Reading from the N-terminus, the 566-residue chain is Chaperonin GroEL 1 (566 aa).

Residues Thr-29 to Pro-32, Asp-86 to Thr-90, Gly-413, and Asp-492 each bind ATP. The tract at residues Asp-520 to Gly-540 is disordered. The span at Gly-529 to Gly-540 shows a compositional bias: gly residues.

The protein belongs to the chaperonin (HSP60) family. As to quaternary structure, forms a cylinder of 14 subunits composed of two heptameric rings stacked back-to-back. Interacts with the co-chaperonin GroES.

It is found in the cytoplasm. It catalyses the reaction ATP + H2O + a folded polypeptide = ADP + phosphate + an unfolded polypeptide.. Its function is as follows. Together with its co-chaperonin GroES, plays an essential role in assisting protein folding. The GroEL-GroES system forms a nano-cage that allows encapsulation of the non-native substrate proteins and provides a physical environment optimized to promote and accelerate protein folding. In Prochlorococcus marinus (strain MIT 9313), this protein is Chaperonin GroEL 1.